A 427-amino-acid chain; its full sequence is Tyrosine--tRNA ligase (427 aa).

Residue Tyr33 participates in L-tyrosine binding. Residues 38 to 47 (PTASSLTIGN) carry the 'HIGH' region motif. L-tyrosine-binding residues include Tyr168 and Gln172. The short motif at 228-232 (KFGKS) is the 'KMSKS' region element. Lys231 is an ATP binding site. The S4 RNA-binding domain occupies 361–427 (LDLLSTLTNS…KKNYYLLRFN (67 aa)).

It belongs to the class-I aminoacyl-tRNA synthetase family. TyrS type 1 subfamily. In terms of assembly, homodimer.

The protein resides in the cytoplasm. The catalysed reaction is tRNA(Tyr) + L-tyrosine + ATP = L-tyrosyl-tRNA(Tyr) + AMP + diphosphate + H(+). Its function is as follows. Catalyzes the attachment of tyrosine to tRNA(Tyr) in a two-step reaction: tyrosine is first activated by ATP to form Tyr-AMP and then transferred to the acceptor end of tRNA(Tyr). This is Tyrosine--tRNA ligase from Cytophaga hutchinsonii (strain ATCC 33406 / DSM 1761 / CIP 103989 / NBRC 15051 / NCIMB 9469 / D465).